Reading from the N-terminus, the 243-residue chain is 3-deoxy-manno-octulosonate cytidylyltransferase (243 aa).

Belongs to the KdsB family.

It localises to the cytoplasm. The enzyme catalyses 3-deoxy-alpha-D-manno-oct-2-ulosonate + CTP = CMP-3-deoxy-beta-D-manno-octulosonate + diphosphate. The protein operates within nucleotide-sugar biosynthesis; CMP-3-deoxy-D-manno-octulosonate biosynthesis; CMP-3-deoxy-D-manno-octulosonate from 3-deoxy-D-manno-octulosonate and CTP: step 1/1. Activates KDO (a required 8-carbon sugar) for incorporation into bacterial lipopolysaccharide in Gram-negative bacteria. The chain is 3-deoxy-manno-octulosonate cytidylyltransferase from Wigglesworthia glossinidia brevipalpis.